The primary structure comprises 201 residues: Eukaryotic translation initiation factor 4E-5 (201 aa).

A disulfide bond links cysteine 122 and cysteine 126.

This sequence belongs to the eukaryotic initiation factor 4E family. As to quaternary structure, eIF4F is a multi-subunit complex, the composition of which varies with external and internal environmental conditions. It is composed of at least eIF4A, eIF4E and eIF4G. eIF4E is also known to interact with other partners. Enriched in the germline.

In terms of biological role, recognizes and binds the 7-methylguanosine-containing mRNA cap during an early step in the initiation of protein synthesis and facilitates ribosome binding by inducing the unwinding of the mRNAs secondary structures. All 5 eIF4E proteins bind monomethyl cap structures. Only ife-1, ife-2 and ife-5 bind trimethyl cap structures which result from trans-splicing. Translation of trimethyl cap structure mRNAs may be regulated by intracellular redox state; disulfide bonds change the width and depth of the cap-binding cavity determining selectivity to mRNA caps. This chain is Eukaryotic translation initiation factor 4E-5 (ife-5), found in Caenorhabditis elegans.